The sequence spans 309 residues: Dihydroorotate dehydrogenase B (NAD(+)), catalytic subunit (309 aa).

FMN contacts are provided by residues Ser-21 and 45–46 (KA). Residues Lys-45 and 69–73 (NAIGL) each bind substrate. 2 residues coordinate FMN: Asn-99 and Asn-127. Position 127 (Asn-127) interacts with substrate. The active-site Nucleophile is Cys-130. FMN is bound by residues Lys-165 and Ile-191. 192–193 (NT) lines the substrate pocket. FMN is bound by residues Gly-217, 243 to 244 (GG), and 265 to 266 (GT).

Belongs to the dihydroorotate dehydrogenase family. Type 1 subfamily. As to quaternary structure, heterotetramer of 2 PyrK and 2 PyrD type B subunits. It depends on FMN as a cofactor.

It is found in the cytoplasm. It catalyses the reaction (S)-dihydroorotate + NAD(+) = orotate + NADH + H(+). Its pathway is pyrimidine metabolism; UMP biosynthesis via de novo pathway; orotate from (S)-dihydroorotate (NAD(+) route): step 1/1. In terms of biological role, catalyzes the conversion of dihydroorotate to orotate with NAD(+) as electron acceptor. This Bacillus cereus (strain B4264) protein is Dihydroorotate dehydrogenase B (NAD(+)), catalytic subunit (pyrD).